A 347-amino-acid chain; its full sequence is Phenylalanine--tRNA ligase alpha subunit (347 aa).

Glu-261 serves as a coordination point for Mg(2+).

This sequence belongs to the class-II aminoacyl-tRNA synthetase family. Phe-tRNA synthetase alpha subunit type 1 subfamily. In terms of assembly, tetramer of two alpha and two beta subunits. The cofactor is Mg(2+).

The protein resides in the cytoplasm. It catalyses the reaction tRNA(Phe) + L-phenylalanine + ATP = L-phenylalanyl-tRNA(Phe) + AMP + diphosphate + H(+). This Streptococcus thermophilus (strain ATCC BAA-491 / LMD-9) protein is Phenylalanine--tRNA ligase alpha subunit.